The following is a 228-amino-acid chain: Probable septum site-determining protein MinC (228 aa).

This sequence belongs to the MinC family. Interacts with MinD and FtsZ.

In terms of biological role, cell division inhibitor that blocks the formation of polar Z ring septums. Rapidly oscillates between the poles of the cell to destabilize FtsZ filaments that have formed before they mature into polar Z rings. Prevents FtsZ polymerization. The chain is Probable septum site-determining protein MinC from Bacillus cereus (strain G9842).